A 1033-amino-acid polypeptide reads, in one-letter code: Ubiquitin carboxyl-terminal hydrolase 48 (1033 aa).

Residues 89–419 (VGLTNLGATC…NAYMLVYRLQ (331 aa)) enclose the USP domain. Catalysis depends on Cys98, which acts as the Nucleophile. His351 serves as the catalytic Proton acceptor. DUSP domains lie at 457 to 552 (QSVA…KALC), 567 to 690 (NQLN…NKEC), and 710 to 823 (MMAS…RTRA). A disordered region spans residues 610–639 (EQDEDAEHSNGKLNGNAPNKDEVNEEKREE). Positions 878-920 (APELNVSSSEAEEEREENKPEGEQDPDFNQSNGGAKRQKLSHQ) are disordered. Positions 931-1007 (RRSTRHRKVR…ILLKADEPIA (77 aa)) constitute a Ubiquitin-like domain.

It belongs to the peptidase C19 family.

Its subcellular location is the cytoplasm. It is found in the nucleus. It catalyses the reaction Thiol-dependent hydrolysis of ester, thioester, amide, peptide and isopeptide bonds formed by the C-terminal Gly of ubiquitin (a 76-residue protein attached to proteins as an intracellular targeting signal).. Its function is as follows. Recognizes and hydrolyzes the peptide bond at the C-terminal Gly of ubiquitin. Involved in the processing of poly-ubiquitin precursors as well as that of ubiquitinated proteins. In Gallus gallus (Chicken), this protein is Ubiquitin carboxyl-terminal hydrolase 48 (USP48).